The following is a 295-amino-acid chain: WHI2-like protein P4H10.16c (295 aa).

This sequence belongs to the WHI2 family.

It is found in the cytoplasm. Its subcellular location is the nucleus. The chain is WHI2-like protein P4H10.16c from Schizosaccharomyces pombe (strain 972 / ATCC 24843) (Fission yeast).